The following is an 882-amino-acid chain: Valine--tRNA ligase (882 aa).

Positions 45–55 match the 'HIGH' region motif; sequence PNVTGKLHLGH. Residues 519 to 523 carry the 'KMSKS' region motif; it reads KMSKS. An ATP-binding site is contributed by Lys-522. Residues 808–882 are a coiled coil; that stretch reads LADLLNVEEE…RIAEMQKLVK (75 aa).

The protein belongs to the class-I aminoacyl-tRNA synthetase family. ValS type 1 subfamily. Monomer.

The protein localises to the cytoplasm. The enzyme catalyses tRNA(Val) + L-valine + ATP = L-valyl-tRNA(Val) + AMP + diphosphate. In terms of biological role, catalyzes the attachment of valine to tRNA(Val). As ValRS can inadvertently accommodate and process structurally similar amino acids such as threonine, to avoid such errors, it has a 'posttransfer' editing activity that hydrolyzes mischarged Thr-tRNA(Val) in a tRNA-dependent manner. This is Valine--tRNA ligase from Streptococcus pyogenes serotype M3 (strain ATCC BAA-595 / MGAS315).